The chain runs to 425 residues: Glutamyl-tRNA reductase (425 aa).

Substrate is bound by residues 49–52, S109, 114–116, and Q120; these read TCNR and EGQ. C50 (nucleophile) is an active-site residue. An NADP(+)-binding site is contributed by 189-194; that stretch reads GAGETG.

Belongs to the glutamyl-tRNA reductase family. Homodimer.

It catalyses the reaction (S)-4-amino-5-oxopentanoate + tRNA(Glu) + NADP(+) = L-glutamyl-tRNA(Glu) + NADPH + H(+). It participates in porphyrin-containing compound metabolism; protoporphyrin-IX biosynthesis; 5-aminolevulinate from L-glutamyl-tRNA(Glu): step 1/2. The protein operates within porphyrin-containing compound metabolism; chlorophyll biosynthesis. In terms of biological role, catalyzes the NADPH-dependent reduction of glutamyl-tRNA(Glu) to glutamate 1-semialdehyde (GSA). This is Glutamyl-tRNA reductase from Chlorobium luteolum (strain DSM 273 / BCRC 81028 / 2530) (Pelodictyon luteolum).